The primary structure comprises 276 residues: Large ribosomal subunit protein uL2 (276 aa).

The tract at residues 212 to 276 (NRHRGIRPQT…KLIISRKKHK (65 aa)) is disordered. The segment covering 257-276 (YKTRKKKASDKLIISRKKHK) has biased composition (basic residues).

The protein belongs to the universal ribosomal protein uL2 family. In terms of assembly, part of the 50S ribosomal subunit. Forms a bridge to the 30S subunit in the 70S ribosome.

Its function is as follows. One of the primary rRNA binding proteins. Required for association of the 30S and 50S subunits to form the 70S ribosome, for tRNA binding and peptide bond formation. It has been suggested to have peptidyltransferase activity; this is somewhat controversial. Makes several contacts with the 16S rRNA in the 70S ribosome. The protein is Large ribosomal subunit protein uL2 of Helicobacter pylori (strain HPAG1).